The following is a 156-amino-acid chain: Small ribosomal subunit protein uS7 (156 aa).

The protein belongs to the universal ribosomal protein uS7 family. In terms of assembly, part of the 30S ribosomal subunit. Contacts proteins S9 and S11.

One of the primary rRNA binding proteins, it binds directly to 16S rRNA where it nucleates assembly of the head domain of the 30S subunit. Is located at the subunit interface close to the decoding center, probably blocks exit of the E-site tRNA. This Tropheryma whipplei (strain TW08/27) (Whipple's bacillus) protein is Small ribosomal subunit protein uS7.